We begin with the raw amino-acid sequence, 158 residues long: Phosphopantetheine adenylyltransferase (158 aa).

Thr10 lines the substrate pocket. Residues Thr10–Phe11 and His18 each bind ATP. Residues Lys42, Leu74, and Arg88 each coordinate substrate. Residues Gly89 to Arg91, Glu99, and Asn124 to Thr130 each bind ATP.

It belongs to the bacterial CoaD family. As to quaternary structure, homohexamer. Mg(2+) is required as a cofactor.

The protein localises to the cytoplasm. It carries out the reaction (R)-4'-phosphopantetheine + ATP + H(+) = 3'-dephospho-CoA + diphosphate. The protein operates within cofactor biosynthesis; coenzyme A biosynthesis; CoA from (R)-pantothenate: step 4/5. In terms of biological role, reversibly transfers an adenylyl group from ATP to 4'-phosphopantetheine, yielding dephospho-CoA (dPCoA) and pyrophosphate. This chain is Phosphopantetheine adenylyltransferase, found in Shewanella loihica (strain ATCC BAA-1088 / PV-4).